We begin with the raw amino-acid sequence, 336 residues long: Inositol 2-dehydrogenase (336 aa).

This sequence belongs to the Gfo/Idh/MocA family. In terms of assembly, homotetramer.

It catalyses the reaction myo-inositol + NAD(+) = scyllo-inosose + NADH + H(+). Functionally, involved in the oxidation of myo-inositol (MI) to 2-keto-myo-inositol (2KMI or 2-inosose). This chain is Inositol 2-dehydrogenase, found in Paracoccus denitrificans (strain Pd 1222).